Here is a 381-residue protein sequence, read N- to C-terminus: cAMP-dependent protein kinase type I-beta regulatory subunit (381 aa).

The tract at residues 1 to 136 is dimerization and phosphorylation; it reads MASPSCFHSE…ALAKAISKNV (136 aa). S3 carries the post-translational modification Phosphoserine. Y21 carries the 3'-nitrotyrosine modification. Residues 66 to 88 are disordered; sequence LARQKSNSQCDSHDEEISPTPPN. A phosphoserine mark is found at S77 and S83. Residue T85 is modified to Phosphothreonine. Positions 96 to 100 match the Pseudophosphorylation motif motif; the sequence is RRGGV. R97 bears the Omega-N-methylarginine mark. 3',5'-cyclic AMP-binding positions include 137–254, E202, R211, 255–381, E326, and R335; these read LFSH…SKVS and ILES…SLTV.

The protein belongs to the cAMP-dependent kinase regulatory chain family. As to quaternary structure, the inactive holoenzyme is composed of two regulatory chains and two catalytic chains. Activation by cAMP releases the two active catalytic monomers and the regulatory dimer. Interacts with PRKX; regulates this cAMP-dependent protein kinase. Interacts with smAKAP; this interaction may target PRKAR1B to the plasma membrane. In terms of processing, the pseudophosphorylation site binds to the substrate-binding region of the catalytic chain, resulting in the inhibition of its activity. In terms of tissue distribution, abundant in brain and testis. No expression in lung, heart, liver, spleen, kidney and skeletal muscle.

It localises to the cell membrane. Regulatory subunit of the cAMP-dependent protein kinases involved in cAMP signaling in cells. The polypeptide is cAMP-dependent protein kinase type I-beta regulatory subunit (Prkar1b) (Rattus norvegicus (Rat)).